A 158-amino-acid chain; its full sequence is Protein-export protein SecB (158 aa).

The protein belongs to the SecB family. As to quaternary structure, homotetramer, a dimer of dimers. One homotetramer interacts with 1 SecA dimer.

The protein resides in the cytoplasm. In terms of biological role, one of the proteins required for the normal export of preproteins out of the cell cytoplasm. It is a molecular chaperone that binds to a subset of precursor proteins, maintaining them in a translocation-competent state. It also specifically binds to its receptor SecA. In Bartonella quintana (strain Toulouse) (Rochalimaea quintana), this protein is Protein-export protein SecB.